The sequence spans 241 residues: 1-(5-phosphoribosyl)-5-[(5-phosphoribosylamino)methylideneamino] imidazole-4-carboxamide isomerase (241 aa).

Residue D10 is the Proton acceptor of the active site. The Proton donor role is filled by D131.

It belongs to the HisA/HisF family.

It localises to the cytoplasm. It catalyses the reaction 1-(5-phospho-beta-D-ribosyl)-5-[(5-phospho-beta-D-ribosylamino)methylideneamino]imidazole-4-carboxamide = 5-[(5-phospho-1-deoxy-D-ribulos-1-ylimino)methylamino]-1-(5-phospho-beta-D-ribosyl)imidazole-4-carboxamide. The protein operates within amino-acid biosynthesis; L-histidine biosynthesis; L-histidine from 5-phospho-alpha-D-ribose 1-diphosphate: step 4/9. The sequence is that of 1-(5-phosphoribosyl)-5-[(5-phosphoribosylamino)methylideneamino] imidazole-4-carboxamide isomerase from Bifidobacterium longum subsp. infantis (strain ATCC 15697 / DSM 20088 / JCM 1222 / NCTC 11817 / S12).